A 168-amino-acid polypeptide reads, in one-letter code: INO80 complex subunit 3 (168 aa).

Residues 115–129 (TNSTLSTPKSFHSPL) are compositionally biased toward polar residues. The tract at residues 115-168 (TNSTLSTPKSFHSPLQSRGISPSSAQSSAAVSSSRKQKRKRTSEGPSERRARKK) is disordered. Positions 130-148 (QSRGISPSSAQSSAAVSSS) are enriched in low complexity. A compositionally biased stretch (basic and acidic residues) spans 156-168 (TSEGPSERRARKK).

Component of the INO80 chromatin remodeling complex.

It is found in the nucleus. Component of the INO80 complex which remodels chromatin by shifting nucleosomes and is involved in DNA repair. This is INO80 complex subunit 3 (iec3) from Schizosaccharomyces pombe (strain 972 / ATCC 24843) (Fission yeast).